The chain runs to 467 residues: tRNA modification GTPase MnmE (467 aa).

(6S)-5-formyl-5,6,7,8-tetrahydrofolate-binding residues include arginine 25, glutamate 87, and lysine 130. The TrmE-type G domain maps to 226–389 (GLSVVLAGQP…LRGELLRIAG (164 aa)). A K(+)-binding site is contributed by asparagine 236. GTP contacts are provided by residues 236–241 (NVGKSS), 255–261 (TPIAGTT), and 280–283 (DTAG). Position 240 (serine 240) interacts with Mg(2+). Residues threonine 255, isoleucine 257, and threonine 260 each contribute to the K(+) site. Threonine 261 provides a ligand contact to Mg(2+). (6S)-5-formyl-5,6,7,8-tetrahydrofolate is bound at residue lysine 467.

It belongs to the TRAFAC class TrmE-Era-EngA-EngB-Septin-like GTPase superfamily. TrmE GTPase family. As to quaternary structure, homodimer. Heterotetramer of two MnmE and two MnmG subunits. K(+) serves as cofactor.

It localises to the cytoplasm. Exhibits a very high intrinsic GTPase hydrolysis rate. Involved in the addition of a carboxymethylaminomethyl (cmnm) group at the wobble position (U34) of certain tRNAs, forming tRNA-cmnm(5)s(2)U34. This is tRNA modification GTPase MnmE from Burkholderia mallei (strain NCTC 10247).